The following is a 188-amino-acid chain: Acireductone dioxygenase (188 aa).

4 residues coordinate Fe(2+): H97, H99, E103, and H141. Ni(2+) is bound by residues H97, H99, E103, and H141.

This sequence belongs to the acireductone dioxygenase (ARD) family. As to quaternary structure, monomer. Fe(2+) serves as cofactor. It depends on Ni(2+) as a cofactor.

The catalysed reaction is 1,2-dihydroxy-5-(methylsulfanyl)pent-1-en-3-one + O2 = 3-(methylsulfanyl)propanoate + CO + formate + 2 H(+). The enzyme catalyses 1,2-dihydroxy-5-(methylsulfanyl)pent-1-en-3-one + O2 = 4-methylsulfanyl-2-oxobutanoate + formate + 2 H(+). The protein operates within amino-acid biosynthesis; L-methionine biosynthesis via salvage pathway; L-methionine from S-methyl-5-thio-alpha-D-ribose 1-phosphate: step 5/6. Functionally, catalyzes 2 different reactions between oxygen and the acireductone 1,2-dihydroxy-3-keto-5-methylthiopentene (DHK-MTPene) depending upon the metal bound in the active site. Fe-containing acireductone dioxygenase (Fe-ARD) produces formate and 2-keto-4-methylthiobutyrate (KMTB), the alpha-ketoacid precursor of methionine in the methionine recycle pathway. Ni-containing acireductone dioxygenase (Ni-ARD) produces methylthiopropionate, carbon monoxide and formate, and does not lie on the methionine recycle pathway. This chain is Acireductone dioxygenase, found in Xylella fastidiosa (strain 9a5c).